The following is a 762-amino-acid chain: N,N-dimethylformamidase beta subunit (762 aa).

As to quaternary structure, heterotetramer of two DmfA1 (alpha) and two DmfA2 (beta) subunits.

It catalyses the reaction N,N-dimethylformamide + H2O = dimethylamine + formate. Activity is slightly inhibited by Mg(2+) and Mn(2+), and slightly increased by Cu(2+). Activity is slightly inhibited by the chelating agents 8-hydroxyquinoline, ethylenediaminetetraacetate, o-phenanthroline and 2,2'-bipyridyl. Functionally, hydrolyzes N,N-dimethylformamide, and to a lesser extent N,N-dimethylacetamide and N,N-diethylacetamide. Has no activity against the substituted amides N-methylformamide, N-ethylformamide, N-ethylformamide and N-methylacetamide or the unsubstituted amides formamide, nicotinamide, acetoamide, benzamide, acetamide and acrylamide. The protein is N,N-dimethylformamidase beta subunit of Alcaligenes sp.